A 437-amino-acid polypeptide reads, in one-letter code: Chromosomal replication initiator protein DnaA (437 aa).

The domain I, interacts with DnaA modulators stretch occupies residues 1–67 (MKNKIIASLK…KVVKDILGKD (67 aa)). The interval 67–97 (DATYEITFKEIPYETKVESGPLIKKRPLLIT) is domain II. The interval 98–313 (PLNPKYTFEN…GAILRLIAYR (216 aa)) is domain III, AAA+ region. G141, G143, K144, and T145 together coordinate ATP. The domain IV, binds dsDNA stretch occupies residues 314 to 437 (NLYGTLNLSI…SKGFAQGESM (124 aa)).

It belongs to the DnaA family. Oligomerizes as a right-handed, spiral filament on DNA at oriC.

It is found in the cytoplasm. Its function is as follows. Plays an essential role in the initiation and regulation of chromosomal replication. ATP-DnaA binds to the origin of replication (oriC) to initiate formation of the DNA replication initiation complex once per cell cycle. Binds the DnaA box (a 9 base pair repeat at the origin) and separates the double-stranded (ds)DNA. Forms a right-handed helical filament on oriC DNA; dsDNA binds to the exterior of the filament while single-stranded (ss)DNA is stabiized in the filament's interior. The ATP-DnaA-oriC complex binds and stabilizes one strand of the AT-rich DNA unwinding element (DUE), permitting loading of DNA polymerase. After initiation quickly degrades to an ADP-DnaA complex that is not apt for DNA replication. Binds acidic phospholipids. The chain is Chromosomal replication initiator protein DnaA from Thermosipho melanesiensis (strain DSM 12029 / CIP 104789 / BI429).